Consider the following 233-residue polypeptide: Leucyl/phenylalanyl-tRNA--protein transferase (233 aa).

It belongs to the L/F-transferase family.

The protein localises to the cytoplasm. It carries out the reaction N-terminal L-lysyl-[protein] + L-leucyl-tRNA(Leu) = N-terminal L-leucyl-L-lysyl-[protein] + tRNA(Leu) + H(+). It catalyses the reaction N-terminal L-arginyl-[protein] + L-leucyl-tRNA(Leu) = N-terminal L-leucyl-L-arginyl-[protein] + tRNA(Leu) + H(+). The catalysed reaction is L-phenylalanyl-tRNA(Phe) + an N-terminal L-alpha-aminoacyl-[protein] = an N-terminal L-phenylalanyl-L-alpha-aminoacyl-[protein] + tRNA(Phe). Functionally, functions in the N-end rule pathway of protein degradation where it conjugates Leu, Phe and, less efficiently, Met from aminoacyl-tRNAs to the N-termini of proteins containing an N-terminal arginine or lysine. This is Leucyl/phenylalanyl-tRNA--protein transferase from Laribacter hongkongensis (strain HLHK9).